Here is a 189-residue protein sequence, read N- to C-terminus: Interferon alpha-6 (189 aa).

Positions 1–20 (MALPFALLMALVVLSCKSSC) are cleaved as a signal peptide. 2 cysteine pairs are disulfide-bonded: Cys-24/Cys-122 and Cys-52/Cys-162.

It belongs to the alpha/beta interferon family.

It localises to the secreted. Functionally, produced by macrophages, IFN-alpha have antiviral activities. Interferon stimulates the production of two enzymes: a protein kinase and an oligoadenylate synthetase. The sequence is that of Interferon alpha-6 (IFNA6) from Homo sapiens (Human).